Consider the following 145-residue polypeptide: Hemoglobin fetal subunit beta (145 aa).

In terms of domain architecture, Globin spans 1–145 (MLSAEEKASV…VANALAHRYH (145 aa)). His62 and His91 together coordinate heme b.

The protein belongs to the globin family. Heterotetramer of two alpha chains and two beta chains. As to expression, red blood cells.

In terms of biological role, involved in oxygen transport from the lung to the various peripheral tissues. This chain is Hemoglobin fetal subunit beta, found in Capra hircus (Goat).